Here is a 360-residue protein sequence, read N- to C-terminus: DNA replication and repair protein RecF (360 aa).

30 to 37 (GENGAGKT) is a binding site for ATP.

The protein belongs to the RecF family.

The protein resides in the cytoplasm. Its function is as follows. The RecF protein is involved in DNA metabolism; it is required for DNA replication and normal SOS inducibility. RecF binds preferentially to single-stranded, linear DNA. It also seems to bind ATP. This Deinococcus deserti (strain DSM 17065 / CIP 109153 / LMG 22923 / VCD115) protein is DNA replication and repair protein RecF.